A 476-amino-acid polypeptide reads, in one-letter code: Alkaline phosphatase H (476 aa).

The first 26 residues, 1–26 (MTPGYPLALSLAVSMAVLGSALPAQA), serve as a signal peptide directing secretion. Residue aspartate 77 participates in Mg(2+) binding. Aspartate 77 provides a ligand contact to Zn(2+). Serine 128 serves as the catalytic Phosphoserine intermediate. Serine 128 carries the post-translational modification Phosphoserine. Residues aspartate 179 and threonine 181 each coordinate Mg(2+). Serine 206 bears the Phosphoserine mark. A Mg(2+)-binding site is contributed by glutamine 346. Residues aspartate 353, histidine 357, aspartate 395, histidine 396, and histidine 438 each coordinate Zn(2+).

It belongs to the alkaline phosphatase family. Requires Mg(2+) as cofactor. Zn(2+) is required as a cofactor.

Its subcellular location is the secreted. The protein localises to the periplasm. The enzyme catalyses a phosphate monoester + H2O = an alcohol + phosphate. Has only phosphomonoesterase activity. This Pseudomonas aeruginosa (strain UCBPP-PA14) protein is Alkaline phosphatase H (phoA).